The sequence spans 205 residues: dITP/XTP pyrophosphatase (205 aa).

Residue 16 to 21 participates in substrate binding; sequence TGNPGK. The Mg(2+) site is built by glutamate 48 and aspartate 77. The active-site Proton acceptor is aspartate 77. Substrate contacts are provided by residues serine 78, 162 to 165, lysine 185, and 190 to 191; these read FGYD and HR.

Belongs to the HAM1 NTPase family. Homodimer. Requires Mg(2+) as cofactor.

It carries out the reaction XTP + H2O = XMP + diphosphate + H(+). The catalysed reaction is dITP + H2O = dIMP + diphosphate + H(+). It catalyses the reaction ITP + H2O = IMP + diphosphate + H(+). Pyrophosphatase that catalyzes the hydrolysis of nucleoside triphosphates to their monophosphate derivatives, with a high preference for the non-canonical purine nucleotides XTP (xanthosine triphosphate), dITP (deoxyinosine triphosphate) and ITP. Seems to function as a house-cleaning enzyme that removes non-canonical purine nucleotides from the nucleotide pool, thus preventing their incorporation into DNA/RNA and avoiding chromosomal lesions. The protein is dITP/XTP pyrophosphatase of Erwinia tasmaniensis (strain DSM 17950 / CFBP 7177 / CIP 109463 / NCPPB 4357 / Et1/99).